The primary structure comprises 204 residues: Urease accessory protein UreG 1 (204 aa).

14–21 (GPVGSGKT) provides a ligand contact to GTP.

This sequence belongs to the SIMIBI class G3E GTPase family. UreG subfamily. As to quaternary structure, homodimer. UreD, UreF and UreG form a complex that acts as a GTP-hydrolysis-dependent molecular chaperone, activating the urease apoprotein by helping to assemble the nickel containing metallocenter of UreC. The UreE protein probably delivers the nickel.

The protein resides in the cytoplasm. In terms of biological role, facilitates the functional incorporation of the urease nickel metallocenter. This process requires GTP hydrolysis, probably effectuated by UreG. This Methylorubrum populi (strain ATCC BAA-705 / NCIMB 13946 / BJ001) (Methylobacterium populi) protein is Urease accessory protein UreG 1.